The primary structure comprises 604 residues: Integrin alpha-IIb (604 aa).

Residues 1-61 form an FG-GAP repeat; that stretch reads QVLDSPFPTG…ASVQLLVQDS (61 aa). The Extracellular portion of the chain corresponds to 1–558; it reads QVLDSPFPTG…TQLLRALEER (558 aa). Residues Asp-22, Asp-24, Asn-26, Tyr-28, and Asp-30 each contribute to the Ca(2+) site. Intrachain disulfides connect Cys-69-Cys-80 and Cys-86-Cys-141. N-linked (GlcNAc...) asparagine glycosylation is present at Asn-166. 4 cysteine pairs are disulfide-bonded: Cys-198/Cys-204, Cys-270/Cys-283, Cys-422/Cys-486, and Cys-476/Cys-481. Residue Asn-276 is glycosylated (N-linked (GlcNAc...) asparagine). An N-linked (GlcNAc...) asparagine glycan is attached at Asn-527. The helical transmembrane segment at 559–584 threads the bilayer; it reads AIPIWWVLVGVLGGLLLLTILVLAMW. Residues 585 to 604 are Cytoplasmic-facing; that stretch reads KVGFFKRNRPPLEEDDEEGE. Residues 587–591 carry the GFFKR motif motif; sequence GFFKR.

This sequence belongs to the integrin alpha chain family. In terms of assembly, heterodimer of an alpha and a beta subunit. The alpha subunit is composed of a heavy and a light chain linked by a disulfide bond. Alpha-IIb associates with beta-3. Directly interacts with RNF181. Interacts (via C-terminus cytoplasmic tail region) with CIB1; the interaction is direct and calcium-dependent. Interacts (via C-terminus cytoplasmic tail region) with CIB2, CIB3 and CIB4; the interactions are stabilized/increased in a calcium and magnesium-dependent manner. ITGA2B:ITGB3 interacts with PPIA/CYPA; the interaction is ROS and PPIase activity-dependent and is increased in the presence of thrombin. ITGA2B:ITGB3 interacts with SELP (via C-type lectin domain); the interaction mediates cell-cell interaction and adhesion.

It is found in the membrane. Its function is as follows. Integrin alpha-IIb/beta-3 is a receptor for fibronectin, fibrinogen, plasminogen, prothrombin, thrombospondin and vitronectin. It recognizes the sequence R-G-D in a wide array of ligands. It recognizes the sequence H-H-L-G-G-G-A-K-Q-A-G-D-V in fibrinogen gamma chain. Following activation integrin alpha-IIb/beta-3 brings about platelet/platelet interaction through binding of soluble fibrinogen. This step leads to rapid platelet aggregation which physically plugs ruptured endothelial cell surface. This chain is Integrin alpha-IIb (ITGA2B), found in Papio cynocephalus (Yellow baboon).